The primary structure comprises 180 residues: ATP-dependent protease subunit HslV (180 aa).

Threonine 9 is a catalytic residue. Na(+) contacts are provided by alanine 164, cysteine 167, and threonine 170.

This sequence belongs to the peptidase T1B family. HslV subfamily. As to quaternary structure, a double ring-shaped homohexamer of HslV is capped on each side by a ring-shaped HslU homohexamer. The assembly of the HslU/HslV complex is dependent on binding of ATP.

Its subcellular location is the cytoplasm. The catalysed reaction is ATP-dependent cleavage of peptide bonds with broad specificity.. With respect to regulation, allosterically activated by HslU binding. In terms of biological role, protease subunit of a proteasome-like degradation complex believed to be a general protein degrading machinery. The protein is ATP-dependent protease subunit HslV of Leptospira interrogans serogroup Icterohaemorrhagiae serovar Lai (strain 56601).